The primary structure comprises 1200 residues: Nuclear envelope pore membrane protein POM 121 (1200 aa).

Positions 1 to 29 (MSPAAAAADGGERRRPPLGGREGRSRARG) are disordered. Residues 1-56 (MSPAAAAADGGERRRPPLGGREGRSRARGYGGPAGAAALGLALLGLALYLVPAAAA) form a cisternal side region. The segment covering 10–25 (GGERRRPPLGGREGRS) has biased composition (basic and acidic residues). Residues 57–77 (LAWLAVGASAAWWGLSREPRG) form a helical membrane-spanning segment. Positions 76–1200 (RGPRALSSFV…QARRQHTRKK (1125 aa)) are pore side. Serine 83 is modified (phosphoserine). 2 disordered regions span residues 91 to 167 (HPRP…SAVQ) and 177 to 196 (PTPL…GPLS). A compositionally biased stretch (basic and acidic residues) spans 143-152 (LRQDPRERPG). A Phosphoserine modification is found at serine 244. 7 disordered regions span residues 294–328 (KKKR…SAFE), 345–509 (SLKR…ITAE), 530–627 (PDDA…SDSK), 640–692 (SITP…LATP), 706–744 (PATP…PTFK), 1075–1151 (TSGT…SSLS), and 1173–1200 (PSFS…TRKK). Positions 298-312 (TVAEEDQLHLDGQEN) are enriched in basic and acidic residues. Residues serine 319, serine 322, serine 325, serine 345, serine 355, serine 367, and serine 370 each carry the phosphoserine modification. Over residues 365-374 (TSSVSSLASA) the composition is skewed to low complexity. The segment covering 379–397 (IPSSSRNAITSSYSSTRGI) has biased composition (polar residues). The span at 404 to 419 (SGPTSSPFSSPASSRS) shows a compositional bias: low complexity. Phosphoserine is present on residues serine 408, serine 409, serine 412, serine 413, serine 416, and serine 417. 2 stretches are compositionally biased toward basic and acidic residues: residues 424 to 433 (RPAKKTREEE) and 446 to 456 (TDKESPGEKVT). 4 stretches are compositionally biased toward low complexity: residues 463-477 (QQSS…GSSG), 546-574 (PPFT…PLLE), 581-598 (ESPA…TVAA), and 605-621 (PSLL…PLAS). A compositionally biased stretch (polar residues) spans 640-657 (SITPLTDSKSSGVSQAEQ). Low complexity-rich tracts occupy residues 658-669 (SVSTPASTASSP), 681-692 (SPPASSSSLATP), 715-742 (SPLP…TTPT), and 1075-1099 (TSGT…GSLS). Over residues 1100-1121 (QNTLGAPSQGSPFAFSVGSTPE) the composition is skewed to polar residues. A compositionally biased stretch (basic residues) spans 1190–1200 (LQARRQHTRKK).

It belongs to the POM121 family. Post-translationally, proteolytically cleaved by caspase-3 during apoptosis.

It is found in the nucleus. The protein localises to the nuclear pore complex. The protein resides in the nucleus membrane. It localises to the endoplasmic reticulum membrane. Its function is as follows. Essential component of the nuclear pore complex (NPC). The repeat-containing domain may be involved in anchoring components of the pore complex to the pore membrane. When overexpressed in cells induces the formation of cytoplasmic annulate lamellae (AL). The polypeptide is Nuclear envelope pore membrane protein POM 121 (Pom121) (Mus musculus (Mouse)).